Here is a 332-residue protein sequence, read N- to C-terminus: Glycerol-3-phosphate dehydrogenase [NAD(P)+] (332 aa).

The NADPH site is built by Ser-11, Phe-12, Lys-32, and Lys-106. Sn-glycerol 3-phosphate contacts are provided by Lys-106, Gly-137, and Ser-139. Ala-141 is a binding site for NADPH. Residues Lys-192, Asp-245, Ser-255, Arg-256, and Asn-257 each contribute to the sn-glycerol 3-phosphate site. The active-site Proton acceptor is Lys-192. Position 256 (Arg-256) interacts with NADPH. NADPH contacts are provided by Val-280 and Glu-282.

The protein belongs to the NAD-dependent glycerol-3-phosphate dehydrogenase family.

Its subcellular location is the cytoplasm. The catalysed reaction is sn-glycerol 3-phosphate + NAD(+) = dihydroxyacetone phosphate + NADH + H(+). The enzyme catalyses sn-glycerol 3-phosphate + NADP(+) = dihydroxyacetone phosphate + NADPH + H(+). The protein operates within membrane lipid metabolism; glycerophospholipid metabolism. In terms of biological role, catalyzes the reduction of the glycolytic intermediate dihydroxyacetone phosphate (DHAP) to sn-glycerol 3-phosphate (G3P), the key precursor for phospholipid synthesis. This is Glycerol-3-phosphate dehydrogenase [NAD(P)+] from Staphylococcus saprophyticus subsp. saprophyticus (strain ATCC 15305 / DSM 20229 / NCIMB 8711 / NCTC 7292 / S-41).